The primary structure comprises 154 residues: Myoglobin (154 aa).

In terms of domain architecture, Globin spans 2-148 (GLSDGEWQMV…FRNDIAAKYK (147 aa)). 2 positions are modified to phosphoserine: S4 and S32. H65 lines the nitrite pocket. H65 contributes to the O2 binding site. T68 carries the post-translational modification Phosphothreonine. A heme b-binding site is contributed by H94. Residues S121 and S133 each carry the phosphoserine modification.

The protein belongs to the globin family. Monomeric.

It localises to the cytoplasm. The protein localises to the sarcoplasm. It carries out the reaction Fe(III)-heme b-[protein] + nitric oxide + H2O = Fe(II)-heme b-[protein] + nitrite + 2 H(+). The catalysed reaction is H2O2 + AH2 = A + 2 H2O. Monomeric heme protein which primary function is to store oxygen and facilitate its diffusion within muscle tissues. Reversibly binds oxygen through a pentacoordinated heme iron and enables its timely and efficient release as needed during periods of heightened demand. Depending on the oxidative conditions of tissues and cells, and in addition to its ability to bind oxygen, it also has a nitrite reductase activity whereby it regulates the production of bioactive nitric oxide. Under stress conditions, like hypoxia and anoxia, it also protects cells against reactive oxygen species thanks to its pseudoperoxidase activity. This Rattus norvegicus (Rat) protein is Myoglobin.